The primary structure comprises 31 residues: Cliotide T17 (31 aa).

Residues 1–31 (GTVPCGESCVFIPCITGIAGCSCKNKVCYLN) constitute a cross-link (cyclopeptide (Gly-Asn)). 3 disulfide bridges follow: Cys5–Cys21, Cys9–Cys23, and Cys14–Cys28.

Post-translationally, contains 3 disulfide bonds. In terms of processing, this is a cyclic peptide. In terms of tissue distribution, expressed in root nodules but not in seed.

Its function is as follows. Probably participates in a plant defense mechanism. The polypeptide is Cliotide T17 (Clitoria ternatea (Butterfly pea)).